The following is a 215-amino-acid chain: Cytochrome b6 (215 aa).

A helical transmembrane segment spans residues 32 to 52 (IFYCLGGITLTCFLVQVATGF). Cys-35 serves as a coordination point for heme c. His-86 and His-100 together coordinate heme b. Transmembrane regions (helical) follow at residues 90 to 110 (ASMM…TGGF), 116 to 136 (LTWV…VTGY), and 186 to 206 (LHTF…FPMI). Residues His-187 and His-202 each contribute to the heme b site.

The protein belongs to the cytochrome b family. PetB subfamily. The 4 large subunits of the cytochrome b6-f complex are cytochrome b6, subunit IV (17 kDa polypeptide, PetD), cytochrome f and the Rieske protein, while the 4 small subunits are PetG, PetL, PetM and PetN. The complex functions as a dimer. Requires heme b as cofactor. It depends on heme c as a cofactor.

It localises to the plastid. The protein resides in the chloroplast thylakoid membrane. In terms of biological role, component of the cytochrome b6-f complex, which mediates electron transfer between photosystem II (PSII) and photosystem I (PSI), cyclic electron flow around PSI, and state transitions. The protein is Cytochrome b6 of Saccharum hybrid (Sugarcane).